Consider the following 215-residue polypeptide: Ribonuclease HII (215 aa).

The RNase H type-2 domain maps to 19–213 (QTVAGVDEVG…SLRQPSQQID (195 aa)). Asp-25, Glu-26, and Asp-121 together coordinate a divalent metal cation.

The protein belongs to the RNase HII family. It depends on Mn(2+) as a cofactor. Mg(2+) is required as a cofactor.

The protein resides in the cytoplasm. The enzyme catalyses Endonucleolytic cleavage to 5'-phosphomonoester.. Its function is as follows. Endonuclease that specifically degrades the RNA of RNA-DNA hybrids. The protein is Ribonuclease HII of Synechococcus elongatus (strain ATCC 33912 / PCC 7942 / FACHB-805) (Anacystis nidulans R2).